The chain runs to 213 residues: Heterochromatin protein 1 (213 aa).

Disordered stretches follow at residues 1-24 (MGKKTDNPETNNASSGAEEEEEEY) and 74-151 (RKDE…TGFD). Residues 24 to 82 (YAVEKILDRRVRKGKVEYYLKWKGYAETENTWEPEGNLDCQDLIQQYELSRKDEANAAA) form the Chromo 1 domain. Basic and acidic residues predominate over residues 89–104 (SKKERPGSSTKVKETG). Polar residues predominate over residues 105–115 (RTSTTASNSSG). The region spanning 154 to 212 (LEAEKILGASDNNGRLTFLIQFKGVDQAEMVPSTVANVKIPQMVIRFYEERLSWYSDNE) is the Chromo 2 domain.

Its subcellular location is the nucleus. In terms of biological role, structural component of heterochromatin, involved in gene repression and the modification of position-effect-variegation. Recognizes and binds histone H3 tails methylated at 'Lys-9', leading to epigenetic repression. In Drosophila virilis (Fruit fly), this protein is Heterochromatin protein 1 (HP1A).